The following is a 284-amino-acid chain: Protein-S-isoprenylcysteine O-methyltransferase (284 aa).

Residues 1–16 are Cytoplasmic-facing; the sequence is MAGCAARVPPGSEARL. A helical membrane pass occupies residues 17 to 33; it reads SLATFLLGASVLALPLL. At 34–41 the chain is on the lumenal side; sequence TRAGLQGR. A helical transmembrane segment spans residues 42 to 59; that stretch reads TGLALYVAGLNALLLLLY. Topologically, residues 60–69 are cytoplasmic; sequence RPPRYQIAIR. Residues 70–87 form a helical membrane-spanning segment; the sequence is ACFLGFVFGCGVLLSFSQ. The Lumenal segment spans residues 88 to 92; it reads SSWNH. Residues 93–112 form a helical membrane-spanning segment; sequence FGWYVCSLSLFHYSEYLVTA. Residues 113-131 lie on the Cytoplasmic side of the membrane; sequence VNNPKSLSLDSFLLNHSLE. Residues 132-149 traverse the membrane as a helical segment; sequence YTVAALSSWIEFTLENIF. Residues 150-154 lie on the Lumenal side of the membrane; sequence WPELK. A helical transmembrane segment spans residues 155–174; that stretch reads QITWLSAAGLLMVIFGECLR. Residues 175–212 lie on the Cytoplasmic side of the membrane; sequence KVAMFTAGSNFNHVVQSEKSDTHTLVTSGVYAWCRHPS. S-adenosyl-L-methionine contacts are provided by residues Gln-190, 197–200, Tyr-205, and 210–213; these read HTLV and HPSY. Residues 213-228 form a helical membrane-spanning segment; that stretch reads YVGWFYWSIGTQVMLC. Asn-229 is a topological domain (lumenal). Residues 230-244 form a helical membrane-spanning segment; that stretch reads PICGVVYALTVWRFF. Residues 245–284 are Cytoplasmic-facing; the sequence is RDRTEEEEISLIHFFGEEYLDYKKRVPTGLPFIKGVKVGL. Arg-247 is a binding site for substrate. Residue Glu-251 coordinates S-adenosyl-L-methionine.

It belongs to the class VI-like SAM-binding methyltransferase superfamily. Isoprenylcysteine carboxyl methyltransferase family.

It is found in the endoplasmic reticulum membrane. It catalyses the reaction [protein]-C-terminal S-[(2E,6E)-farnesyl]-L-cysteine + S-adenosyl-L-methionine = [protein]-C-terminal S-[(2E,6E)-farnesyl]-L-cysteine methyl ester + S-adenosyl-L-homocysteine. Catalyzes the post-translational methylation of isoprenylated C-terminal cysteine residues. The protein is Protein-S-isoprenylcysteine O-methyltransferase of Rattus norvegicus (Rat).